Consider the following 521-residue polypeptide: Protein nucleotidyltransferase YdiU (521 aa).

Residues Gly-109, Gly-111, Arg-112, Lys-131, Asp-143, Gly-144, Arg-194, and Arg-201 each coordinate ATP. The Proton acceptor role is filled by Asp-270. Residues Asn-271 and Asp-280 each contribute to the Mg(2+) site. Asp-280 contributes to the ATP binding site.

The protein belongs to the SELO family. It depends on Mg(2+) as a cofactor. The cofactor is Mn(2+).

It catalyses the reaction L-seryl-[protein] + ATP = 3-O-(5'-adenylyl)-L-seryl-[protein] + diphosphate. It carries out the reaction L-threonyl-[protein] + ATP = 3-O-(5'-adenylyl)-L-threonyl-[protein] + diphosphate. The enzyme catalyses L-tyrosyl-[protein] + ATP = O-(5'-adenylyl)-L-tyrosyl-[protein] + diphosphate. The catalysed reaction is L-histidyl-[protein] + UTP = N(tele)-(5'-uridylyl)-L-histidyl-[protein] + diphosphate. It catalyses the reaction L-seryl-[protein] + UTP = O-(5'-uridylyl)-L-seryl-[protein] + diphosphate. It carries out the reaction L-tyrosyl-[protein] + UTP = O-(5'-uridylyl)-L-tyrosyl-[protein] + diphosphate. Its function is as follows. Nucleotidyltransferase involved in the post-translational modification of proteins. It can catalyze the addition of adenosine monophosphate (AMP) or uridine monophosphate (UMP) to a protein, resulting in modifications known as AMPylation and UMPylation. The sequence is that of Protein nucleotidyltransferase YdiU from Burkholderia pseudomallei (strain K96243).